We begin with the raw amino-acid sequence, 931 residues long: Mitochondrial cox1 translation regulator ppr4 (931 aa).

Residues 1–16 constitute a mitochondrion transit peptide; it reads MSKSFAYRHIWCFWRF. PPR repeat units lie at residues 247-277, 282-316, 429-461, 462-496, 497-531, 598-632, and 683-713; these read NEVL…MYRT, SFTA…RPKI, HLLN…KIKV, DERT…GIKT, SNQA…GITE, NVVH…GKAP, and PPSL…YLEY.

In terms of assembly, component of the MRH5C complex, composed of mrh5, ppr4, mtf2, and sls1. Proteins mtf2 and sls1 form a subcomplex that serves as a scaffold to bring mrh5 and ppr4 together. The MRH5C complex associates with the small subunit of the mitochondrial ribosome.

It is found in the mitochondrion. Functionally, RNA-binding translation activation factor that as part of the MRH5C complex specifically recruits cox1 mRNA to the mitochondrial ribosome for translation initiation. The polypeptide is Mitochondrial cox1 translation regulator ppr4 (Schizosaccharomyces pombe (strain 972 / ATCC 24843) (Fission yeast)).